The sequence spans 219 residues: Phosphate-specific transport system accessory protein PhoU homolog 1 (219 aa).

Belongs to the PhoU family. In terms of assembly, homodimer.

It is found in the cytoplasm. Functionally, plays a role in the regulation of phosphate uptake. This chain is Phosphate-specific transport system accessory protein PhoU homolog 1, found in Methanothermobacter thermautotrophicus (strain ATCC 29096 / DSM 1053 / JCM 10044 / NBRC 100330 / Delta H) (Methanobacterium thermoautotrophicum).